We begin with the raw amino-acid sequence, 345 residues long: Putative membrane protein ORF59 (345 aa).

The next 4 helical transmembrane spans lie at 46–63 (LVFAYVTLVLLYVIMMLI), 101–118 (IVFVALGVNFLLVILVFL), 147–165 (IFGIMSFIFVFIITVFSIL), and 265–286 (VVPVILLVMFILYMFLHLWMVI).

The protein resides in the membrane. The protein is Putative membrane protein ORF59 (ORF59) of Ictalurid herpesvirus 1 (strain Auburn) (IcHV-1).